Here is a 352-residue protein sequence, read N- to C-terminus: S-adenosylmethionine:tRNA ribosyltransferase-isomerase (352 aa).

This sequence belongs to the QueA family. As to quaternary structure, monomer.

It is found in the cytoplasm. It catalyses the reaction 7-aminomethyl-7-carbaguanosine(34) in tRNA + S-adenosyl-L-methionine = epoxyqueuosine(34) in tRNA + adenine + L-methionine + 2 H(+). It participates in tRNA modification; tRNA-queuosine biosynthesis. Its function is as follows. Transfers and isomerizes the ribose moiety from AdoMet to the 7-aminomethyl group of 7-deazaguanine (preQ1-tRNA) to give epoxyqueuosine (oQ-tRNA). In Vibrio cholerae serotype O1 (strain ATCC 39315 / El Tor Inaba N16961), this protein is S-adenosylmethionine:tRNA ribosyltransferase-isomerase.